The chain runs to 89 residues: Small ribosomal subunit protein uS17 (89 aa).

The protein belongs to the universal ribosomal protein uS17 family. As to quaternary structure, part of the 30S ribosomal subunit.

One of the primary rRNA binding proteins, it binds specifically to the 5'-end of 16S ribosomal RNA. The sequence is that of Small ribosomal subunit protein uS17 from Paracidovorax citrulli (strain AAC00-1) (Acidovorax citrulli).